Consider the following 447-residue polypeptide: Probable glycine dehydrogenase (decarboxylating) subunit 1 (447 aa).

It belongs to the GcvP family. N-terminal subunit subfamily. The glycine cleavage system is composed of four proteins: P, T, L and H. In this organism, the P 'protein' is a heterodimer of two subunits.

The catalysed reaction is N(6)-[(R)-lipoyl]-L-lysyl-[glycine-cleavage complex H protein] + glycine + H(+) = N(6)-[(R)-S(8)-aminomethyldihydrolipoyl]-L-lysyl-[glycine-cleavage complex H protein] + CO2. In terms of biological role, the glycine cleavage system catalyzes the degradation of glycine. The P protein binds the alpha-amino group of glycine through its pyridoxal phosphate cofactor; CO(2) is released and the remaining methylamine moiety is then transferred to the lipoamide cofactor of the H protein. In Maricaulis maris (strain MCS10) (Caulobacter maris), this protein is Probable glycine dehydrogenase (decarboxylating) subunit 1.